Reading from the N-terminus, the 98-residue chain is NADH-ubiquinone oxidoreductase chain 4L (98 aa).

A run of 3 helical transmembrane segments spans residues 2 to 22, 26 to 46, and 58 to 79; these read PSTF…TLMF, LMST…MTSV, and PIPI…ALLV.

The protein belongs to the complex I subunit 4L family. As to quaternary structure, core subunit of respiratory chain NADH dehydrogenase (Complex I) which is composed of 45 different subunits.

It is found in the mitochondrion inner membrane. It carries out the reaction a ubiquinone + NADH + 5 H(+)(in) = a ubiquinol + NAD(+) + 4 H(+)(out). Its function is as follows. Core subunit of the mitochondrial membrane respiratory chain NADH dehydrogenase (Complex I) which catalyzes electron transfer from NADH through the respiratory chain, using ubiquinone as an electron acceptor. Part of the enzyme membrane arm which is embedded in the lipid bilayer and involved in proton translocation. The protein is NADH-ubiquinone oxidoreductase chain 4L of Mus musculus (Mouse).